Reading from the N-terminus, the 59-residue chain is Large ribosomal subunit protein uL30 (59 aa).

Belongs to the universal ribosomal protein uL30 family. Part of the 50S ribosomal subunit.

This Edwardsiella ictaluri (strain 93-146) protein is Large ribosomal subunit protein uL30.